The sequence spans 312 residues: Fasciclin-like arabinogalactan protein elcF (312 aa).

The first 16 residues, 1–16 (MKLFTLLLPALTSAHS), serve as a signal peptide directing secretion. FAS1 domains lie at 17 to 160 (LSTL…NASM) and 162 to 289 (LPHN…DKVL). Asn48, Asn68, Asn113, Asn157, and Asn165 each carry an N-linked (GlcNAc...) asparagine glycan.

The protein belongs to the fasciclin-like AGP family.

It functions in the pathway secondary metabolite biosynthesis. Its function is as follows. Fasciclin-like arabinogalactan protein; part of the gene cluster that mediates the biosynthesis of elsinochrome C, a perelyenequinone phytotoxin structurally similar to cercosporin. The first step of elsinochrome C biosynthesis is performed by the polyketide synthase elcA which catalyzes the formation of nor-toralactone. The starter unit acyltransferase (SAT) domain of elcA initiates polyketide extension by the selective utilization of acetyl-CoA, which is elongated to the heptaketide in the beta-ketoacyl synthase (KS) domain by successive condensations with six malonyl units introduced by the malonyl acyltransferase (MAT) domain. The product template (PT) domain catalyzes C4-C9 and C2-C11 aldol cyclizations and dehydrations to a trihydroxynaphthalene, which is thought to be delivered to the thioesterase (TE) domain for product release. The bifunctional enzyme elcB then methylates nor-toralactone to toralactone before conducting an unusual oxidative aromatic ring opening. The next step in perylenequinone biosynthesis is an O-methylation at the nascent OH-6 of the elcB product performed by the O-methyltransferase elcD. The oxidative coupling of the two monomeric naphthol units in perylenequinone biosynthesis is catalyzed by the FAD-dependent monooxygenase elcE and the multicopper oxidase elcG. ElcG might catalyze the first intermolecular coupling in a regio- and stereo-selective manner via a phenol radical coupling mechanism and the elcE could forge the second C-C bond intramolecularly via a hydride transfer mechanism. The fasciclin domain-containing protein elcF might also play a role duting this step. The last piece of the puzzle in the biosynthesis of elsinochrome C is the additional annulation by enolate coupling to afford the dihydrobenzo(ghi)perylenequinone system, catalyzed by the FAD-dependent monooxygenase elcH. This is Fasciclin-like arabinogalactan protein elcF from Phaeosphaeria nodorum (strain SN15 / ATCC MYA-4574 / FGSC 10173) (Glume blotch fungus).